Reading from the N-terminus, the 520-residue chain is Probable cytosol aminopeptidase (520 aa).

K232 and D237 together coordinate Mn(2+). K244 is an active-site residue. D255, D314, and E316 together coordinate Mn(2+). Residue R318 is part of the active site. Residues K488–K520 form a disordered region.

Belongs to the peptidase M17 family. Mn(2+) is required as a cofactor.

Its subcellular location is the cytoplasm. It carries out the reaction Release of an N-terminal amino acid, Xaa-|-Yaa-, in which Xaa is preferably Leu, but may be other amino acids including Pro although not Arg or Lys, and Yaa may be Pro. Amino acid amides and methyl esters are also readily hydrolyzed, but rates on arylamides are exceedingly low.. The enzyme catalyses Release of an N-terminal amino acid, preferentially leucine, but not glutamic or aspartic acids.. Its function is as follows. Presumably involved in the processing and regular turnover of intracellular proteins. Catalyzes the removal of unsubstituted N-terminal amino acids from various peptides. In Metamycoplasma salivarium (Mycoplasma salivarium), this protein is Probable cytosol aminopeptidase (pepA).